The sequence spans 98 residues: Secreted LysM effector Mgx1LysM (98 aa).

An N-terminal signal peptide occupies residues 1 to 18 (MKVTTIIAALLSVAVVDA). Intrachain disulfides connect C31/C89 and C62/C97. The 49-residue stretch at 37 to 85 (IPYVVKKGDTLTHIAHDIYKRKVGICDLAYTNHIGKNPNLIYAGQTLLI) folds into the LysM domain. Chitin contacts are provided by G44, T48, N75, and I77.

This sequence belongs to the secreted LysM effector family. As to quaternary structure, forms homodimers in a chitin-independent manner through interactions at the N-termini of Mgx1LysM monomers. Homodimers are further polymerized in a chitin-dependent manner.

The protein resides in the secreted. It localises to the cell wall. Functionally, secreted effector that enables the plant pathogenic fungus to manipulate host defenses for successful infection. Binds chitin and suppresses the chitin-induced reactive oxygen species (ROS) burst. Chitin-induced polymerization of homodimers forms a contiguous Mg1LysM highly oligomeric super-complexe that is anchored to the chitin in the fungal cell wall to prevent hydrolysis by host chitinases. The polypeptide is Secreted LysM effector Mgx1LysM (Zymoseptoria tritici (strain ST99CH_3D7)).